The chain runs to 341 residues: Serine/threonine-protein kinase pdik1l (341 aa).

Residues 8–332 (YELIQEVGRG…FELELRLVRI (325 aa)) form the Protein kinase domain. 14 to 22 (VGRGSYGVV) is an ATP binding site. The active-site Proton acceptor is the aspartate 164.

This sequence belongs to the protein kinase superfamily. Ser/Thr protein kinase family.

It is found in the nucleus. The catalysed reaction is L-seryl-[protein] + ATP = O-phospho-L-seryl-[protein] + ADP + H(+). It carries out the reaction L-threonyl-[protein] + ATP = O-phospho-L-threonyl-[protein] + ADP + H(+). This Danio rerio (Zebrafish) protein is Serine/threonine-protein kinase pdik1l (pdik1l).